Here is a 206-residue protein sequence, read N- to C-terminus: Alpha-1-acid glycoprotein 3 (206 aa).

A signal peptide spans 1–18 (MELHTVLIMLSLLPLLEA). N-linked (GlcNAc...) asparagine glycosylation is found at asparagine 33, asparagine 75, and asparagine 103. The cysteines at positions 90 and 183 are disulfide-linked. Residues 187-206 (EKKHLELEKETKKDPEESQA) form a disordered region.

The protein belongs to the calycin superfamily. Lipocalin family.

Its subcellular location is the secreted. Functionally, functions as a transport protein in the blood stream. Binds various ligands in the interior of its beta-barrel domain. Appears to function in modulating the activity of the immune system during the acute-phase reaction. The polypeptide is Alpha-1-acid glycoprotein 3 (Orm3) (Mus musculus (Mouse)).